Reading from the N-terminus, the 154-residue chain is U1 small nuclear ribonucleoprotein C (154 aa).

The Matrin-type zinc-finger motif lies at 4-36 (YYCDYCDTYLTHDSPSVRKTHCTGRKHKDNVKF).

The protein belongs to the U1 small nuclear ribonucleoprotein C family. U1 snRNP is composed of the 7 core Sm proteins B/B', D1, D2, D3, E, F and G that assemble in a heptameric protein ring on the Sm site of the small nuclear RNA to form the core snRNP, and at least 3 U1 snRNP-specific proteins U1-70K, U1-A and U1-C. U1-C interacts with U1 snRNA and the 5' splice-site region of the pre-mRNA.

It localises to the nucleus. Functionally, component of the spliceosomal U1 snRNP, which is essential for recognition of the pre-mRNA 5' splice-site and the subsequent assembly of the spliceosome. U1-C is directly involved in initial 5' splice-site recognition for both constitutive and regulated alternative splicing. The interaction with the 5' splice-site seems to precede base-pairing between the pre-mRNA and the U1 snRNA. Stimulates commitment or early (E) complex formation by stabilizing the base pairing of the 5' end of the U1 snRNA and the 5' splice-site region. This chain is U1 small nuclear ribonucleoprotein C, found in Aedes aegypti (Yellowfever mosquito).